Reading from the N-terminus, the 666-residue chain is Protein SLY1 (666 aa).

4 repeat units span residues 106-142 (KENI…DLAQ), 220-257 (KGGP…DSLE), 436-474 (LDIL…QNVE), and 478-514 (KEND…DGSD). Residues 106-514 (KENIDIIVND…QNKSLEDGSD (409 aa)) form a 4 X approximate repeats region.

This sequence belongs to the STXBP/unc-18/SEC1 family. Interacts with SED5.

It is found in the cytoplasm. The protein resides in the membrane. In terms of biological role, able to suppress the functional loss of YPT1. SLY1 is essential for cell viability. May interact indirectly, or directly with YPT1. This Saccharomyces cerevisiae (strain ATCC 204508 / S288c) (Baker's yeast) protein is Protein SLY1 (SLY1).